The primary structure comprises 450 residues: Glutamate--tRNA ligase 2 (450 aa).

The 'HIGH' region signature appears at 10–20 (PSPTGRIHIGN). Positions 243–247 (GFSKR) match the 'KMSKS' region motif. Lys246 serves as a coordination point for ATP.

It belongs to the class-I aminoacyl-tRNA synthetase family. Glutamate--tRNA ligase type 1 subfamily. In terms of assembly, monomer.

The protein localises to the cytoplasm. The enzyme catalyses tRNA(Glu) + L-glutamate + ATP = L-glutamyl-tRNA(Glu) + AMP + diphosphate. In terms of biological role, catalyzes the attachment of glutamate to tRNA(Glu) in a two-step reaction: glutamate is first activated by ATP to form Glu-AMP and then transferred to the acceptor end of tRNA(Glu). This Beijerinckia indica subsp. indica (strain ATCC 9039 / DSM 1715 / NCIMB 8712) protein is Glutamate--tRNA ligase 2.